The following is a 149-amino-acid chain: Calmodulin-6 (149 aa).

EF-hand domains are found at residues 8-43 (DQIS…LGQN), 44-79 (PTEA…KMKD), 81-116 (DSEE…LGEK), and 117-149 (LSDE…MMAK). Positions 21, 23, 25, 27, 32, 57, 59, 61, 63, 68, 94, 96, 98, 105, 130, 132, 134, 136, and 141 each coordinate Ca(2+).

It belongs to the calmodulin family. In terms of assembly, interacts with KCBP.

Its function is as follows. Calmodulin mediates the control of a large number of enzymes, ion channels and other proteins by Ca(2+). Among the enzymes to be stimulated by the calmodulin-Ca(2+) complex are a number of protein kinases and phosphatases. The sequence is that of Calmodulin-6 (CAM6) from Arabidopsis thaliana (Mouse-ear cress).